The following is a 140-amino-acid chain: MEQELMRIGVSLPDNLLNKFDSIIEGRGYSSRSEGIRDSIRTYINQYEWMSDIRGRRVGTITIIYDHTKRGLSNAVADIQHDYSDLIKSSVHIHLDHDNCLEVIIFDGEGELIKEMDERLMALKGVKYVKLNTAPPAEKI.

Ni(2+) is bound by residues histidine 81, histidine 92, histidine 94, and cysteine 100.

The protein belongs to the transcriptional regulatory CopG/NikR family. The cofactor is Ni(2+).

Transcriptional regulator. This is Putative nickel-responsive regulator from Methanococcoides burtonii (strain DSM 6242 / NBRC 107633 / OCM 468 / ACE-M).